The chain runs to 629 residues: Kelch-like protein 8 (629 aa).

Residues 1-10 (MASESTNGKQ) are compositionally biased toward polar residues. Residues 1–40 (MASESTNGKQARSHVTKGRRQYQHQHQQQQQQQQQVRSRS) form a disordered region. Residue A2 is modified to N-acetylalanine. Positions 11 to 23 (ARSHVTKGRRQYQ) are enriched in basic residues. Residues 24–35 (HQHQQQQQQQQQ) are compositionally biased toward low complexity. The region spanning 76–143 (CDVTLKVGSK…VYSSRLTLTV (68 aa)) is the BTB domain. The 102-residue stretch at 178-279 (CLAVRAFAES…LPVDFLMGVV (102 aa)) folds into the BACK domain. Kelch repeat units lie at residues 328-375 (VLFC…SVEG), 376-422 (KVYA…SLGG), 424-469 (IYAI…ALIN), 471-516 (VYAV…ELHG), 517-563 (CLYV…TVMG), and 565-610 (IFAV…VCDC).

Component of the BCR(KLHL8) E3 ubiquitin ligase complex, at least composed of CUL3, KLHL8 and RBX1. Interacts with RAPSN.

The protein operates within protein modification; protein ubiquitination. In terms of biological role, substrate-specific adapter of a BCR (BTB-CUL3-RBX1) E3 ubiquitin ligase complex required for The BCR(KLHL8) ubiquitin ligase complex mediates ubiquitination and degradation of RAPSN. The sequence is that of Kelch-like protein 8 (Klhl8) from Mus musculus (Mouse).